We begin with the raw amino-acid sequence, 284 residues long: RAD52 motif-containing protein 1 (284 aa).

The interval 1–92 (MAELVPFAVP…KQLFQKSPVK (92 aa)) is necessary for nuclear localization and for nucleolar accumulation in response to heat shock. In terms of domain architecture, RRM spans 15-98 (KTLLVWELSS…SPVKVRLGTR (84 aa)). Residues 90-133 (PVKVRLGTRHKAVQHQALALNSSRCQELANYYFGFNGWSKRIIK) are necessary for nuclear and nucleolar localization.

In terms of assembly, homodimer.

It is found in the nucleus. The protein resides in the cytoplasm. It localises to the nucleolus. The protein localises to the cajal body. Its subcellular location is the PML body. Functionally, may confer resistance to the antitumor agent cisplatin. Binds to DNA and RNA. The polypeptide is RAD52 motif-containing protein 1 (RDM1) (Macaca fascicularis (Crab-eating macaque)).